The sequence spans 139 residues: Putative pre-16S rRNA nuclease (139 aa).

Belongs to the YqgF nuclease family.

It localises to the cytoplasm. In terms of biological role, could be a nuclease involved in processing of the 5'-end of pre-16S rRNA. The protein is Putative pre-16S rRNA nuclease of Phocaeicola vulgatus (strain ATCC 8482 / DSM 1447 / JCM 5826 / CCUG 4940 / NBRC 14291 / NCTC 11154) (Bacteroides vulgatus).